We begin with the raw amino-acid sequence, 258 residues long: NAD kinase (258 aa).

The Proton acceptor role is filled by D51. Residues 51–52 (DG), R56, 119–120 (ND), K130, D149, 160–165 (TAYSLS), and A184 contribute to the NAD(+) site.

This sequence belongs to the NAD kinase family. A divalent metal cation is required as a cofactor.

The protein localises to the cytoplasm. It catalyses the reaction NAD(+) + ATP = ADP + NADP(+) + H(+). Involved in the regulation of the intracellular balance of NAD and NADP, and is a key enzyme in the biosynthesis of NADP. Catalyzes specifically the phosphorylation on 2'-hydroxyl of the adenosine moiety of NAD to yield NADP. In Thermotoga neapolitana (strain ATCC 49049 / DSM 4359 / NBRC 107923 / NS-E), this protein is NAD kinase.